A 119-amino-acid polypeptide reads, in one-letter code: Large ribosomal subunit protein uL18 (119 aa).

Belongs to the universal ribosomal protein uL18 family. Part of the 50S ribosomal subunit; part of the 5S rRNA/L5/L18/L25 subcomplex. Contacts the 5S and 23S rRNAs.

In terms of biological role, this is one of the proteins that bind and probably mediate the attachment of the 5S RNA into the large ribosomal subunit, where it forms part of the central protuberance. This chain is Large ribosomal subunit protein uL18, found in Clostridium botulinum (strain ATCC 19397 / Type A).